We begin with the raw amino-acid sequence, 703 residues long: UvrABC system protein B (703 aa).

The region spanning 33–190 is the Helicase ATP-binding domain; sequence TRIENGENDV…RRFVAMQYKR (158 aa). 46–53 is a binding site for ATP; it reads GATGTGKT. The Beta-hairpin motif lies at 99-122; that stretch reads YYDYYQPEAYIPQTDTYIEKDSNI. Residues 436 to 589 form the Helicase C-terminal domain; it reads QIDDLLAEIK…QIAYNQEHGI (154 aa). A UVR domain is found at 659 to 694; that stretch reads ADLIRQLSEQMHTAAEQLQFELAARLRDEIRDLKKE.

Belongs to the UvrB family. In terms of assembly, forms a heterotetramer with UvrA during the search for lesions. Interacts with UvrC in an incision complex.

The protein resides in the cytoplasm. Functionally, the UvrABC repair system catalyzes the recognition and processing of DNA lesions. A damage recognition complex composed of 2 UvrA and 2 UvrB subunits scans DNA for abnormalities. Upon binding of the UvrA(2)B(2) complex to a putative damaged site, the DNA wraps around one UvrB monomer. DNA wrap is dependent on ATP binding by UvrB and probably causes local melting of the DNA helix, facilitating insertion of UvrB beta-hairpin between the DNA strands. Then UvrB probes one DNA strand for the presence of a lesion. If a lesion is found the UvrA subunits dissociate and the UvrB-DNA preincision complex is formed. This complex is subsequently bound by UvrC and the second UvrB is released. If no lesion is found, the DNA wraps around the other UvrB subunit that will check the other stand for damage. This is UvrABC system protein B from Bifidobacterium longum subsp. infantis (strain ATCC 15697 / DSM 20088 / JCM 1222 / NCTC 11817 / S12).